Reading from the N-terminus, the 317-residue chain is Probable F-box protein At2g36090 (317 aa).

The F-box domain occupies 25 to 74 (IESHILTRLDGATLASVSCASSHLHHLASNEILWSKICRSTWPSCSGGSR).

This Arabidopsis thaliana (Mouse-ear cress) protein is Probable F-box protein At2g36090.